Here is a 117-residue protein sequence, read N- to C-terminus: Holo-[acyl-carrier-protein] synthase (117 aa).

Mg(2+) contacts are provided by Asp-8 and Glu-55.

The protein belongs to the P-Pant transferase superfamily. AcpS family. Requires Mg(2+) as cofactor.

It localises to the cytoplasm. It catalyses the reaction apo-[ACP] + CoA = holo-[ACP] + adenosine 3',5'-bisphosphate + H(+). In terms of biological role, transfers the 4'-phosphopantetheine moiety from coenzyme A to a Ser of acyl-carrier-protein. This chain is Holo-[acyl-carrier-protein] synthase, found in Finegoldia magna (strain ATCC 29328 / DSM 20472 / WAL 2508) (Peptostreptococcus magnus).